The following is a 394-amino-acid chain: Protein TsgA homolog (394 aa).

12 helical membrane passes run 11 to 31, 51 to 71, 76 to 96, 101 to 121, 134 to 154, 162 to 182, 206 to 226, 251 to 271, 274 to 294, 302 to 322, 334 to 354, and 363 to 383; these read WISY…GMVM, FLNA…EIIP, LMFG…GKSL, LCMF…TFLI, LLFT…VAAM, WYWV…LTLF, IGVL…LGFI, FWTS…FFDL, IVTI…STDN, IMAL…LGSL, FILT…GPIV, and LTTA…LGFV.

Belongs to the major facilitator superfamily. TsgA family.

It localises to the cell inner membrane. The protein is Protein TsgA homolog of Serratia proteamaculans (strain 568).